We begin with the raw amino-acid sequence, 360 residues long: Vomilenine reductase (360 aa).

An Enoyl reductase (ER) domain is found at Gly-23–Ile-351. Position 50 (Cys-50) interacts with Zn(2+). Ser-52 provides a ligand contact to an alcohol. Ser-52 lines the NADP(+) pocket. Residues Asp-53, His-72, Glu-73, Cys-103, Cys-106, Cys-109, Cys-117, and Cys-166 each contribute to the Zn(2+) site. His-72 serves as a coordination point for an alcohol. Residues Leu-192, Gly-194, Leu-195, Ser-214, Thr-215, Ser-216, Lys-219, Lys-220, Val-277, Ala-279, Ser-301, and Arg-348 each coordinate NADP(+).

The protein belongs to the zinc-containing alcohol dehydrogenase family. Class-P subfamily. In terms of assembly, homodimer. It depends on Zn(2+) as a cofactor. In terms of tissue distribution, confined to roots.

It localises to the cytoplasm. It catalyses the reaction (2R)-1,2-dihydrovomilenine + NADP(+) = vomilenine + NADPH + H(+). The protein operates within alkaloid biosynthesis; ajmaline biosynthesis. Its activity is regulated as follows. Inhibited by EDTA and p-hydroxymercuribenzoate, a sulfhydryl reagent. In terms of biological role, alcohol dehydrogenase involved in the biosynthesis of ajmaline-type monoterpenoid indole alkaloids (MIAs) natural products, important plant-derived pharmaceuticals used in the therapy of heart disorders. Catalyzes the conversion of vomilenine to 1,2-dihydrovomilenine, an intermediate chemical in the biosynthesis of ajmaline. This chain is Vomilenine reductase, found in Rauvolfia serpentina (Serpentine wood).